The following is a 417-amino-acid chain: Serine hydroxymethyltransferase (417 aa).

(6S)-5,6,7,8-tetrahydrofolate-binding positions include leucine 121 and 125-127; that span reads GHL. Lysine 229 bears the N6-(pyridoxal phosphate)lysine mark. A (6S)-5,6,7,8-tetrahydrofolate-binding site is contributed by 355-357; sequence SPF.

It belongs to the SHMT family. Homodimer. The cofactor is pyridoxal 5'-phosphate.

The protein localises to the cytoplasm. It catalyses the reaction (6R)-5,10-methylene-5,6,7,8-tetrahydrofolate + glycine + H2O = (6S)-5,6,7,8-tetrahydrofolate + L-serine. It functions in the pathway one-carbon metabolism; tetrahydrofolate interconversion. Its pathway is amino-acid biosynthesis; glycine biosynthesis; glycine from L-serine: step 1/1. Its function is as follows. Catalyzes the reversible interconversion of serine and glycine with tetrahydrofolate (THF) serving as the one-carbon carrier. This reaction serves as the major source of one-carbon groups required for the biosynthesis of purines, thymidylate, methionine, and other important biomolecules. Also exhibits THF-independent aldolase activity toward beta-hydroxyamino acids, producing glycine and aldehydes, via a retro-aldol mechanism. This is Serine hydroxymethyltransferase from Stenotrophomonas maltophilia (strain R551-3).